A 397-amino-acid chain; its full sequence is Elongation factor Tu (397 aa).

A tr-type G domain is found at 10–207; sequence KPHVNVGTIG…TLDSYIPEPV (198 aa). The G1 stretch occupies residues 19 to 26; that stretch reads GHVDHGKT. 19 to 26 is a binding site for GTP; that stretch reads GHVDHGKT. Thr26 contacts Mg(2+). The interval 60 to 64 is G2; the sequence is GITIN. The residue at position 77 (Tyr77) is a Phosphotyrosine. The segment at 81–84 is G3; sequence DCPG. 81 to 85 contacts GTP; that stretch reads DCPGH. The residue at position 88 (Tyr88) is a Phosphotyrosine. Position 136-139 (136-139) interacts with GTP; that stretch reads NKAD. Residues 136–139 form a G4 region; sequence NKAD. Positions 174 to 176 are G5; the sequence is SAL.

Belongs to the TRAFAC class translation factor GTPase superfamily. Classic translation factor GTPase family. EF-Tu/EF-1A subfamily. As to quaternary structure, monomer.

It localises to the cytoplasm. It carries out the reaction GTP + H2O = GDP + phosphate + H(+). GTP hydrolase that promotes the GTP-dependent binding of aminoacyl-tRNA to the A-site of ribosomes during protein biosynthesis. The protein is Elongation factor Tu of Pseudomonas aeruginosa (strain UCBPP-PA14).